The primary structure comprises 1531 residues: Slit homolog 1 protein (1531 aa).

The N-terminal stretch at 1–33 is a signal peptide; it reads MALTPQRGSSSGLSRPELWLLLWAAAWRLGATA. Residues 34–61 form the LRRNT domain; it reads CPALCTCTGTTVDCHGTGLQAIPKNIPR. LRR repeat units lie at residues 62–83, 86–107, 110–131, 134–155, 158–179, and 182–203; these read NTERLELNGNNITRIHKNDFAG, QLRVLQLMENQIGAVERGAFDD, ELERLRLNRNQLQVLPELLFQN, ALSRLDLSENSLQAVPRKAFRG, DLKNLQLDKNQISCIEEGAFRA, and GLEVLTLNNNNITTIPVSSFNH. N72 carries N-linked (GlcNAc...) asparagine glycosylation. N192 carries an N-linked (GlcNAc...) asparagine glycan. Residues 215 to 265 enclose the LRRCT 1 domain; that stretch reads NHLFCDCHLAWLSQWLRQRPTIGLFTQCSGPASLRGLNVAEVQKSEFSCSG. In terms of domain architecture, LRRNT 2 spans 273–309; that stretch reads PACTLSSGSCPAMCSCSNGIVDCRGKGLTAIPANLPE. C286 and C295 are disulfide-bonded. LRR repeat units follow at residues 310 to 331, 334 to 355, 358 to 379, 382 to 403, and 406 to 427; these read TMTEIRLELNGIKSIPPGAFSP, KLRRIDLSNNQIAEIAPDAFQG, SLNSLVLYGNKITDLPRGVFGG, TLQLLLLNANKINCIRPDAFQD, and NLSLLSLYDNKIQSLAKGTFTS. A glycan (N-linked (GlcNAc...) asparagine) is linked at N406. In terms of domain architecture, LRRCT 2 spans 439–489; that stretch reads NPFICDCNLKWLADFLRTNPIETTGARCASPRRLANKRIGQIKSKKFRCSA. Intrachain disulfides connect C443/C466, C445/C487, C513/C519, and C517/C526. The LRRNT 3 domain occupies 504-540; sequence NSECTSDVACPHKCRCEASVVECSGLKLSKIPERIPQ. LRR repeat units follow at residues 541-562, 566-587, 590-611, 614-635, and 638-659; these read STTELRLNNNEISILEATGLFK, HLKKINLSNNKVSEIEDGTFEG, SVSELHLTANQLESVRSGMFRG, GLRTLMLRNNRISCIHNDSFTG, and NVRLLSLYDNHITTISPGAFDT. N-linked (GlcNAc...) asparagine glycosylation is present at N571. N-linked (GlcNAc...) asparagine glycosylation is present at N630. One can recognise an LRRCT 3 domain in the interval 671–721; the sequence is NPFNCNCQLAWLGDWLRKRKIVTGNPRCQNPDFLRQIPLQDVAFPDFRCEE. 2 disulfides stabilise this stretch: C675–C698 and C677–C719. The LRRNT 4 domain occupies 725 to 761; sequence EVGCLPRPQCPQECACLDTVVRCSNKHLQALPKGIPK. N762, N801, and N806 each carry an N-linked (GlcNAc...) asparagine glycan. LRR repeat units lie at residues 762–783, 785–806, 809–830, and 833–854; these read NVTELYLDGNQFTLVPGQLSTF, YLQLVDLSNNKISSLSNSSFTN, QLTTLILSYNALQCIPPLAFQG, and SLRLLSLHGNDVSTLQEGIFAD. Positions 866 to 916 constitute an LRRCT 4 domain; it reads NPLYCDCHLRWLSSWVKTGYKEPGIARCAGPPEMEGKLLLTTPAKKFECQG. EGF-like domains lie at 927–962, 964–1003, 1005–1041, 1043–1081, 1083–1119, and 1124–1160; these read DPCLSSPCQNQGTCHNDPLEVYRCTCPSGYKGRNCE, SLDSCSSNPCGNGGTCHAQEGEDAGFTCSCPSGFEGLTCG, NTDDCVKHDCVNGGVCVDGIGNYTCQCPLQYTGRACE, LVDFCSPDLNPCQHEAQCVGTPEGPRCECVPGYTGDNCS, NQDDCKDHQCQNGAQCVDEINSYACLCAEGYSGQLCE, and PRNSCEGTECQNGANCVDQGSRPVCQCLPGFGGPECE. Disulfide bonds link C929-C940, C934-C950, C952-C961, C968-C979, C973-C991, C993-C1002, C1009-C1020, C1014-C1029, C1031-C1040, C1047-C1060, C1054-C1069, C1071-C1080, C1087-C1098, C1092-C1107, C1109-C1118, C1128-C1139, C1133-C1148, and C1150-C1159. N1026 is a glycosylation site (N-linked (GlcNAc...) asparagine). A glycan (N-linked (GlcNAc...) asparagine) is linked at N1079. One can recognise a Laminin G-like domain in the interval 1163–1336; it reads LSVNFVDRDT…QMKPGVVPGC (174 aa). N-linked (GlcNAc...) asparagine glycosylation is found at N1186, N1256, and N1303. Intrachain disulfides connect C1310-C1336, C1339-C1349, C1344-C1359, C1361-C1370, C1378-C1388, C1383-C1398, C1400-C1409, C1419-C1429, C1424-C1439, C1441-C1450, C1456-C1495, C1474-C1509, C1485-C1525, and C1489-C1527. 3 consecutive EGF-like domains span residues 1337-1371, 1374-1410, and 1415-1451; these read EPCRKLYCLHGICQPNATPGPVCHCEAGWGGLHCD, VDGPCHGHKCVHGKCVPLDALAYSCQCQDGYSGALCN, and VAEPCGGLQCLHGHCQASATRGAHCVCSPGFSGELCE. A CTCK domain is found at 1456–1531; sequence CRGDPVRDFH…PTKCGCAPCA (76 aa).

In terms of assembly, interacts with ROBO1 and GREM1. As to expression, in adult brains expressed in the hippocampus, cerebral cortex, and olfactory bulb but not in the cerebellum. In embryo expressed in cerebral cortex.

Its subcellular location is the secreted. Its function is as follows. Thought to act as molecular guidance cue in cellular migration, and function appears to be mediated by interaction with roundabout homolog receptors. During neural development involved in axonal navigation at the ventral midline of the neural tube and projection of axons to different regions. SLIT1 and SLIT2 together seem to be essential for midline guidance in the forebrain by acting as repulsive signal preventing inappropriate midline crossing by axons projecting from the olfactory bulb. The sequence is that of Slit homolog 1 protein (Slit1) from Rattus norvegicus (Rat).